The chain runs to 283 residues: Formamidopyrimidine-DNA glycosylase (283 aa).

Pro2 functions as the Schiff-base intermediate with DNA in the catalytic mechanism. The active-site Proton donor is the Glu3. Lys58 (proton donor; for beta-elimination activity) is an active-site residue. The DNA site is built by His100, Arg119, and Arg162. The segment at 247 to 283 (DVYGREGAPCKGEGCTGQIKRIVQSGRSSFYCAQCQR) adopts an FPG-type zinc-finger fold. Arg273 (proton donor; for delta-elimination activity) is an active-site residue.

This sequence belongs to the FPG family. As to quaternary structure, monomer. Requires Zn(2+) as cofactor.

The enzyme catalyses Hydrolysis of DNA containing ring-opened 7-methylguanine residues, releasing 2,6-diamino-4-hydroxy-5-(N-methyl)formamidopyrimidine.. The catalysed reaction is 2'-deoxyribonucleotide-(2'-deoxyribose 5'-phosphate)-2'-deoxyribonucleotide-DNA = a 3'-end 2'-deoxyribonucleotide-(2,3-dehydro-2,3-deoxyribose 5'-phosphate)-DNA + a 5'-end 5'-phospho-2'-deoxyribonucleoside-DNA + H(+). In terms of biological role, involved in base excision repair of DNA damaged by oxidation or by mutagenic agents. Acts as a DNA glycosylase that recognizes and removes damaged bases. Has a preference for oxidized purines, such as 7,8-dihydro-8-oxoguanine (8-oxoG). Has AP (apurinic/apyrimidinic) lyase activity and introduces nicks in the DNA strand. Cleaves the DNA backbone by beta-delta elimination to generate a single-strand break at the site of the removed base with both 3'- and 5'-phosphates. The sequence is that of Formamidopyrimidine-DNA glycosylase from Roseobacter denitrificans (strain ATCC 33942 / OCh 114) (Erythrobacter sp. (strain OCh 114)).